Here is a 219-residue protein sequence, read N- to C-terminus: UPF0126 membrane protein SCO5481 (219 aa).

6 helical membrane-spanning segments follow: residues 10–30, 34–54, 66–86, 93–113, 120–140, and 158–178; these read VQHTLDLVGIFVFAISGALLA, NFDVFGIAVLAEVTALGGGLF, AFTDLGYFLTPLLATLLVFFL, LQTGVNIFDAAGLGLFCVAGT, GLGLTASACLGLTTAVGGGVL, and LYAVPAIVGSAMVALCIRYEA.

The protein belongs to the UPF0126 family.

The protein resides in the cell membrane. The polypeptide is UPF0126 membrane protein SCO5481 (Streptomyces coelicolor (strain ATCC BAA-471 / A3(2) / M145)).